The sequence spans 594 residues: UV-stimulated scaffold protein A homolog (594 aa).

The VHS-like stretch occupies residues 24–170 (RKNLNRFIRE…VTLKKTKFVD (147 aa)). The stretch at 170-198 (DYENGAKKIEAERKRKKILEERKMKMIEN) forms a coiled coil. Residues 466 to 493 (RKVCLAKMKSGKLCPRKDYYTCPLHGKI) form a UVSSA-type zinc finger. The Zn(2+) site is built by cysteine 469, cysteine 479, cysteine 487, and histidine 490. The stretch at 503-540 (INEEDRLEENYRKEQNHLKEADKIRQMIEKEYESKTKR) forms a coiled coil. The disordered stretch occupies residues 533–558 (EYESKTKRRKKHDVDTTASEDVRNRL). Over residues 544–558 (HDVDTTASEDVRNRL) the composition is skewed to basic and acidic residues.

The protein belongs to the UVSSA family.

The protein localises to the chromosome. Functionally, factor involved in transcription-coupled nucleotide excision repair (TC-NER) in response to UV damage. TC-NER allows RNA polymerase II-blocking lesions to be rapidly removed from the transcribed strand of active genes. The protein is UV-stimulated scaffold protein A homolog of Caenorhabditis elegans.